The sequence spans 186 residues: Interferon beta (186 aa).

Residues Met1–Ser21 form the signal peptide. The residue at position 24 (Tyr24) is a Phosphotyrosine. N-linked (GlcNAc...) asparagine glycans are attached at residues Asn46, Asn101, Asn131, and Asn136. Cys52 and Cys161 are oxidised to a cystine.

This sequence belongs to the alpha/beta interferon family. In terms of assembly, monomer.

The protein resides in the secreted. Its function is as follows. Type I interferon cytokine that plays a key role in the innate immune response to infection, developing tumors and other inflammatory stimuli. Signals via binding to high-affinity (IFNAR2) and low-affinity (IFNAR1) heterodimeric receptor, activating the canonical Jak-STAT signaling pathway resulting in transcriptional activation or repression of interferon-regulated genes that encode the effectors of the interferon response, such as antiviral proteins, regulators of cell proliferation and differentiation, and immunoregulatory proteins. Signals mostly via binding to a IFNAR1-IFNAR2 heterodimeric receptor, but can also function with IFNAR1 alone and independently of Jak-STAT pathways. Elicits a wide variety of responses, including antiviral and antibacterial activities, and can regulate the development of B-cells, myelopoiesis and lipopolysaccharide (LPS)-inducible production of tumor necrosis factor. Plays a role in neuronal homeostasis by regulating dopamine turnover and protecting dopaminergic neurons: acts by promoting neuronal autophagy and alpha-synuclein clearance, thereby preventing dopaminergic neuron loss. IFNB1 is more potent than interferon-alpha (IFN-alpha) in inducing the apoptotic and antiproliferative pathways required for control of tumor cell growth. This chain is Interferon beta (IFNB1), found in Felis catus (Cat).